The primary structure comprises 522 residues: Lysine--tRNA ligase (522 aa).

Residues 44-52 (PSGLPHIGT) carry the 'HIGH' region motif. A 'KMSKS' region motif is present at residues 290–294 (KISKS). Lys293 is a binding site for ATP.

It belongs to the class-I aminoacyl-tRNA synthetase family.

The protein localises to the cytoplasm. It catalyses the reaction tRNA(Lys) + L-lysine + ATP = L-lysyl-tRNA(Lys) + AMP + diphosphate. The sequence is that of Lysine--tRNA ligase from Rickettsia bellii (strain RML369-C).